Reading from the N-terminus, the 453-residue chain is Serine/threonine-protein phosphatase 2A regulatory subunit B'' subunit gamma (453 aa).

Positions 1-27 (MDWKDVLRRRLASPNSDPKRKKSEQEL) are disordered. 2 consecutive EF-hand domains span residues 273-308 (PSAL…TMTN) and 341-376 (KEPA…IQEL). Ca(2+) is bound by residues D286, D288, N290, M292, and E297.

In terms of assembly, interacts with MCM3AP/GANP, PPP5C, and the phosphatase 2A core enzyme composed of the PPP2CA catalytic subunit and the constant regulatory subunit PPP2R1A. Finds in a complex with ABCB1, TFPI2 and PPP2R3C; leading to the dephosphorylation of ABCB1.

Its subcellular location is the nucleus. It is found in the cytoplasm. May regulate MCM3AP phosphorylation through phosphatase recruitment. May act as a negative regulator of ABCB1 expression and function through the dephosphorylation of ABCB1 by TFPI2/PPP2R3C complex. May play a role in the activation-induced cell death of B-cells. In Rattus norvegicus (Rat), this protein is Serine/threonine-protein phosphatase 2A regulatory subunit B'' subunit gamma (Ppp2r3c).